We begin with the raw amino-acid sequence, 433 residues long: Glutamate-rich protein 2 (433 aa).

5 disordered regions span residues 56-86, 113-161, 189-273, 308-344, and 394-433; these read VPAA…LAPP, DSAS…KHPQ, SRQN…SIET, CLED…TRAP, and EKAQ…EDGS. Pro residues predominate over residues 63–85; sequence PAPPPPRALRPAPGPPRSAPLAP. Over residues 114–127 the composition is skewed to polar residues; it reads SASQARGSEPSSSA. 2 stretches are compositionally biased toward basic and acidic residues: residues 199-214 and 244-258; these read DPKE…EKPQ and ARKE…DKVS. Polar residues predominate over residues 259–273; the sequence is LKSSENRPSSRSIET. 2 stretches are compositionally biased toward acidic residues: residues 308 to 334 and 397 to 433; these read CLED…EDDE and QEEE…EDGS.

This chain is Glutamate-rich protein 2 (Erich2), found in Rattus norvegicus (Rat).